Reading from the N-terminus, the 376-residue chain is Chaperone protein DnaJ (376 aa).

A J domain is found at 5 to 70 (DYYEVLGVGR…DKKAAYDQFG (66 aa)). A CR-type zinc finger spans residues 132–210 (GLTKELRIPT…CHGDGRVEKS (79 aa)). Zn(2+) is bound by residues cysteine 145, cysteine 148, cysteine 162, cysteine 165, cysteine 184, cysteine 187, cysteine 198, and cysteine 201. CXXCXGXG motif repeat units follow at residues 145-152 (CDLCDGSG), 162-169 (CTTCHGQG), 184-191 (CPTCHGRG), and 198-205 (CTKCHGDG).

It belongs to the DnaJ family. Homodimer. It depends on Zn(2+) as a cofactor.

The protein resides in the cytoplasm. Its function is as follows. Participates actively in the response to hyperosmotic and heat shock by preventing the aggregation of stress-denatured proteins and by disaggregating proteins, also in an autonomous, DnaK-independent fashion. Unfolded proteins bind initially to DnaJ; upon interaction with the DnaJ-bound protein, DnaK hydrolyzes its bound ATP, resulting in the formation of a stable complex. GrpE releases ADP from DnaK; ATP binding to DnaK triggers the release of the substrate protein, thus completing the reaction cycle. Several rounds of ATP-dependent interactions between DnaJ, DnaK and GrpE are required for fully efficient folding. Also involved, together with DnaK and GrpE, in the DNA replication of plasmids through activation of initiation proteins. The protein is Chaperone protein DnaJ of Shewanella putrefaciens (strain CN-32 / ATCC BAA-453).